The sequence spans 1055 residues: Elongation factor 3 (1055 aa).

Val45 serves as a coordination point for ADP. 7 HEAT repeats span residues 48–86 (FTQI…NGAA), 96–133 (SAEN…SMNP), 134–172 (WASF…SAPF), 176–213 (EAMP…LVEN), 218–255 (KFVP…APTI), 257–290 (LIAP…LVDS), and 296–337 (PFLP…VPAE). ABC transporter domains follow at residues 447–659 (CNIE…SYYQ) and 687–1004 (LKMR…KKAA). Residues Asn723, Glu933, Asn936, and His962 each coordinate ADP. The segment at 1024–1055 (EKKLSAADKRKAKKDRMARRKRGEEVFSDEEL) is disordered. Residues 1033–1044 (RKAKKDRMARRK) are compositionally biased toward basic residues.

Belongs to the ABC transporter superfamily. ABCF family. EF3 subfamily. In terms of assembly, interacts with CCH1; the interaction is direct and required for the localization of CCH1 to the cell membrane.

It is found in the cytoplasm. It localises to the cytosol. The enzyme catalyses ATP + H2O = ADP + phosphate + H(+). It participates in protein biosynthesis; polypeptide chain elongation. Ribosome-dependent ATPase that functions in cytoplasmic translation elongation. Required for the ATP-dependent release of deacylated tRNA from the ribosomal E-site during protein biosynthesis. Stimulates the eEF1A-dependent binding of aminoacyl-tRNA to the ribosomal A-site, which has reduced affinity for tRNA as long as the E-site is occupied. Assists translation termination by stimulating the release of nascent protein from the ribosome by release factors. Appears to localize calcium-channel protein CCH1 to the plasma membrane. In Cryptococcus neoformans var. grubii serotype A (strain H99 / ATCC 208821 / CBS 10515 / FGSC 9487) (Filobasidiella neoformans var. grubii), this protein is Elongation factor 3.